The primary structure comprises 115 residues: Putative UPF0377 protein YHL045W (115 aa).

Residues 10 to 30 (ACIFIDSVCEGIVFWGLCLFV) traverse the membrane as a helical segment.

Belongs to the UPF0377 family.

It localises to the membrane. In Saccharomyces cerevisiae (strain ATCC 204508 / S288c) (Baker's yeast), this protein is Putative UPF0377 protein YHL045W.